The sequence spans 117 residues: Large ribosomal subunit protein bL20 (117 aa).

This sequence belongs to the bacterial ribosomal protein bL20 family.

In terms of biological role, binds directly to 23S ribosomal RNA and is necessary for the in vitro assembly process of the 50S ribosomal subunit. It is not involved in the protein synthesizing functions of that subunit. The sequence is that of Large ribosomal subunit protein bL20 from Campylobacter lari (strain RM2100 / D67 / ATCC BAA-1060).